The following is a 162-amino-acid chain: MALRQIRLENDPILRKKSREVEKIDDRIKQIVEDMFETMYENKGIGLACVQVGMLKRIVVIDMQDEDGKMVLINPKIIEKSEEKQINIEGCLSVPGKNGYVERPKTVVVEYTDLNGNTQRVMGTDYKAHCFCHELDHLDGVLYTDKVLNLSEEEVERLNNEK.

Residues C91 and H133 each coordinate Fe cation. The active site involves E134. Fe cation is bound at residue H137.

It belongs to the polypeptide deformylase family. The cofactor is Fe(2+).

It carries out the reaction N-terminal N-formyl-L-methionyl-[peptide] + H2O = N-terminal L-methionyl-[peptide] + formate. Functionally, removes the formyl group from the N-terminal Met of newly synthesized proteins. Requires at least a dipeptide for an efficient rate of reaction. N-terminal L-methionine is a prerequisite for activity but the enzyme has broad specificity at other positions. The chain is Peptide deformylase from Finegoldia magna (strain ATCC 29328 / DSM 20472 / WAL 2508) (Peptostreptococcus magnus).